The primary structure comprises 1124 residues: Phytochrome A1 (1124 aa).

Low complexity predominate over residues 1–14 (MSSSRPSQSSTTSA). Residues 1-20 (MSSSRPSQSSTTSARSKHSA) are disordered. The region spanning 218–401 (SMERLCDTMV…VFAIHVNKEL (184 aa)) is the GAF domain. C323 provides a ligand contact to phytochromobilin. In terms of domain architecture, PAS 1 spans 617-687 (VTAEMVRLIE…KMLELALQGK (71 aa)). Positions 690 to 746 (RNVEFEIKTHGPSGDSSPISLIVNACASRDVGDSVVGVCFIAQDITGQKNIMDKFTR) constitute a PAC domain. Residues 747–821 (IEGDYRAIIQ…KNQEAFVNFG (75 aa)) enclose the PAS 2 domain. The region spanning 901–1118 (YIRRQIRNPL…TFIISVELAV (218 aa)) is the Histidine kinase domain.

Belongs to the phytochrome family. As to quaternary structure, homodimer. Contains one covalently linked phytochromobilin chromophore.

In terms of biological role, regulatory photoreceptor which exists in two forms that are reversibly interconvertible by light: the Pr form that absorbs maximally in the red region of the spectrum and the Pfr form that absorbs maximally in the far-red region. Photoconversion of Pr to Pfr induces an array of morphogenic responses, whereas reconversion of Pfr to Pr cancels the induction of those responses. Pfr controls the expression of a number of nuclear genes including those encoding the small subunit of ribulose-bisphosphate carboxylase, chlorophyll A/B binding protein, protochlorophyllide reductase, rRNA, etc. It also controls the expression of its own gene(s) in a negative feedback fashion. This Nicotiana tabacum (Common tobacco) protein is Phytochrome A1 (PHYA1).